Here is a 278-residue protein sequence, read N- to C-terminus: 4-deoxy-L-threo-5-hexosulose-uronate ketol-isomerase (278 aa).

Positions 196, 198, 203, and 245 each coordinate Zn(2+).

Belongs to the KduI family. Homohexamer. Requires Zn(2+) as cofactor.

The catalysed reaction is 5-dehydro-4-deoxy-D-glucuronate = 3-deoxy-D-glycero-2,5-hexodiulosonate. It functions in the pathway glycan metabolism; pectin degradation; 2-dehydro-3-deoxy-D-gluconate from pectin: step 4/5. In terms of biological role, catalyzes the isomerization of 5-dehydro-4-deoxy-D-glucuronate to 3-deoxy-D-glycero-2,5-hexodiulosonate. The chain is 4-deoxy-L-threo-5-hexosulose-uronate ketol-isomerase from Escherichia coli (strain UTI89 / UPEC).